Here is a 558-residue protein sequence, read N- to C-terminus: UvrABC system protein C (558 aa).

Residues 12-92 (LLPGVYIFYG…IFNHKPKYNV (81 aa)) form the GIY-YIG domain. A UVR domain is found at 200–235 (SETLDLIEEKMKKHAKMMDFENAAKYRDLLVKFENV).

The protein belongs to the UvrC family. In terms of assembly, interacts with UvrB in an incision complex.

The protein resides in the cytoplasm. In terms of biological role, the UvrABC repair system catalyzes the recognition and processing of DNA lesions. UvrC both incises the 5' and 3' sides of the lesion. The N-terminal half is responsible for the 3' incision and the C-terminal half is responsible for the 5' incision. In Pseudothermotoga lettingae (strain ATCC BAA-301 / DSM 14385 / NBRC 107922 / TMO) (Thermotoga lettingae), this protein is UvrABC system protein C.